A 62-amino-acid chain; its full sequence is DNA-directed RNA polymerase subunit Rpo10 (62 aa).

Positions 6, 9, 43, and 44 each coordinate Zn(2+).

The protein belongs to the archaeal Rpo10/eukaryotic RPB10 RNA polymerase subunit family. Part of the RNA polymerase complex. It depends on Zn(2+) as a cofactor.

It is found in the cytoplasm. It catalyses the reaction RNA(n) + a ribonucleoside 5'-triphosphate = RNA(n+1) + diphosphate. Functionally, DNA-dependent RNA polymerase (RNAP) catalyzes the transcription of DNA into RNA using the four ribonucleoside triphosphates as substrates. This Methanosarcina barkeri (strain Fusaro / DSM 804) protein is DNA-directed RNA polymerase subunit Rpo10.